We begin with the raw amino-acid sequence, 227 residues long: Killer cell lectin-like receptor subfamily B member 1A (227 aa).

The Cytoplasmic portion of the chain corresponds to 1 to 45 (MDTARVYFGLKPPRTPGAWHESPPSLPPDACRCPRSHRLALKLSC). The short motif at 31–34 (CRCP) is the LCK-binding motif element. Residues 46 to 66 (AGLILLVVTLIGMSVLVRVLI) traverse the membrane as a helical; Signal-anchor for type II membrane protein segment. The Extracellular portion of the chain corresponds to 67 to 227 (QKPSIEKCYV…TLSNYVGYGH (161 aa)). In terms of domain architecture, C-type lectin spans 93–212 (ECPQDWLSHR…NSDNRWICQK (120 aa)). Disulfide bonds link Cys-94-Cys-105, Cys-122-Cys-210, and Cys-189-Cys-202.

In terms of assembly, homodimer; disulfide-linked. Interacts with tyrosine kinase LCK. In terms of tissue distribution, expressed in natural killer cells.

The protein localises to the membrane. In terms of biological role, plays a stimulatory role on natural killer (NK) cell cytotoxicity. The protein is Killer cell lectin-like receptor subfamily B member 1A (Klrb1a) of Mus musculus (Mouse).